Consider the following 305-residue polypeptide: Heterogeneous nuclear ribonucleoprotein A0 (305 aa).

At methionine 1 the chain carries N-acetylmethionine. The RRM 1 domain occupies 7–86; it reads CKLFIGGLNV…VELKRAVSRE (80 aa). A Phosphoserine modification is found at serine 68. Residue lysine 80 forms a Glycyl lysine isopeptide (Lys-Gly) (interchain with G-Cter in SUMO2) linkage. The residue at position 84 (serine 84) is a Phosphoserine; by MAPKAPK2. Residues lysine 96, lysine 98, lysine 99, and lysine 106 each participate in a glycyl lysine isopeptide (Lys-Gly) (interchain with G-Cter in SUMO2) cross-link. The region spanning 98 to 175 is the RRM 2 domain; sequence KKLFVGGLKG…HRVEVKKAVP (78 aa). At lysine 133 the chain carries N6-acetyllysine. At arginine 139 the chain carries Omega-N-methylarginine. Residues lysine 154, lysine 159, lysine 172, and lysine 176 each participate in a glycyl lysine isopeptide (Lys-Gly) (interchain with G-Cter in SUMO2) cross-link. 2 disordered regions span residues 178–211 and 265–305; these read DIHAGGGGARAARGGRGGGRGRGGGGGGGGRDQN and QSSY…GGSF. Gly residues-rich tracts occupy residues 181–211 and 272–284; these read AGGGGARAARGGRGGGRGRGGGGGGGGRDQN and KSGGGGGGGGSWG. The residue at position 286 (arginine 286) is an Omega-N-methylarginine. The segment covering 292–305 has biased composition (gly residues); the sequence is YRGGYGGGYGGGSF. Asymmetric dimethylarginine; alternate is present on arginine 293. Arginine 293 carries the post-translational modification Dimethylated arginine; alternate. Position 293 is an omega-N-methylarginine; alternate (arginine 293).

In terms of processing, phosphorylated at Ser-84 by MAPKAPK2 in response to LPS treatment, promoting stabilization of GADD45A mRNA. Arg-293 is dimethylated, probably to asymmetric dimethylarginine.

It localises to the nucleus. MRNA-binding component of ribonucleosomes. Specifically binds AU-rich element (ARE)-containing mRNAs. Involved in post-transcriptional regulation of cytokines mRNAs. This is Heterogeneous nuclear ribonucleoprotein A0 (Hnrnpa0) from Mus musculus (Mouse).